The chain runs to 410 residues: Maintenance of mitochondrial morphology protein 1 (410 aa).

Over 1-19 (MTPDSCPVRPEPTLSFTQG) the chain is Lumenal. A helical transmembrane segment spans residues 20-40 (LIVGQISVVFLIAAFIKFFIF). The Cytoplasmic portion of the chain corresponds to 41–410 (GDPPSAEETA…PMPGSLAVDD (370 aa)). Residues 71 to 87 (LRTSNQRPGSQQQQSVL) show a composition bias toward polar residues. Residues 71–98 (LRTSNQRPGSQQQQSVLNRKKSSILRSG) form a disordered region. The SMP-LTD domain maps to 119-335 (QPESLDWFNV…EPRFQEIPLP (217 aa)). Positions 380–410 (ARQAAQRDSLRYRRPRADDAFPMPGSLAVDD) are disordered. Over residues 387-398 (DSLRYRRPRADD) the composition is skewed to basic and acidic residues.

It belongs to the MMM1 family. Homodimer. Component of the ER-mitochondria encounter structure (ERMES) or MDM complex, composed of MMM1, MDM10, MDM12 and MDM34. An MMM1 homodimer associates with one molecule of MDM12 on each side in a pairwise head-to-tail manner, and the SMP-LTD domains of MMM1 and MDM12 generate a continuous hydrophobic tunnel for phospholipid trafficking.

The protein resides in the endoplasmic reticulum membrane. Component of the ERMES/MDM complex, which serves as a molecular tether to connect the endoplasmic reticulum (ER) and mitochondria. Components of this complex are involved in the control of mitochondrial shape and protein biogenesis, and function in nonvesicular lipid trafficking between the ER and mitochondria. The MDM12-MMM1 subcomplex functions in the major beta-barrel assembly pathway that is responsible for biogenesis of all outer membrane beta-barrel proteins, and acts in a late step after the SAM complex. The MDM10-MDM12-MMM1 subcomplex further acts in the TOM40-specific pathway after the action of the MDM12-MMM1 complex. Essential for establishing and maintaining the structure of mitochondria and maintenance of mtDNA nucleoids. The chain is Maintenance of mitochondrial morphology protein 1 from Pyricularia oryzae (strain 70-15 / ATCC MYA-4617 / FGSC 8958) (Rice blast fungus).